Here is a 594-residue protein sequence, read N- to C-terminus: MNADFLGLLLLYLTILLCAAPLLGRHIRQAMNGERTWLTAWGQPLERGLYRLAGVDPAAEMDWRRYAVAMLVFNVLGVLAVYALQRLQGWLPLNPAGLPGVAPDSALNTAISFVTNTNWQGYAGESTMSYLTQMLALTVQNFVSAATGIAVLIALVRGLARHSAATLGNFWADLVRATLYVLLPLSFILALALVSQGVVQNLDPYVEAQTVQAQQYETARLDAQGQPMTGPAGQPLTDTVVTRVQTLPMGPVASQEAIKLLGTNGGGFFNANSAHPYENPNAWSNLLEMLAILLIPAALCWTFGEMVGSRRQGVAILAAMTVLFAGFAASAAYFEQQPTPALRQAEAALLADGGNLEGKEARFGVAATALFATVTTAASCGAVNGMHDSFSALGGVTPLLQMQLGEVIYGGVGSGLYGMLAFAILAVFIAGLMIGRTPEYLGKKIEALDMQMVALVILATPALVLAGTAVAVLADAGRAGVLNPGAHGFSEILYAMSSAANNNGSAFAGLSANTPFYNVLLGLAMWFGRYTIIVAILALAGSLAAKPRLPASVGGMPTTGPLFVALLVGAVLLVGALTYVPALALGPVAEHLQP.

10 consecutive transmembrane segments (helical) span residues 3–23 (ADFLGLLLLYLTILLCAAPLL), 67–87 (AVAMLVFNVLGVLAVYALQRL), 136–156 (ALTVQNFVSAATGIAVLIALV), 179–199 (LYVLLPLSFILALALVSQGVV), 287–307 (LEMLAILLIPAALCWTFGEMV), 314–334 (VAILAAMTVLFAGFAASAAYF), 415–435 (GLYGMLAFAILAVFIAGLMIG), 453–473 (VALVILATPALVLAGTAVAVL), 519–539 (VLLGLAMWFGRYTIIVAILAL), and 562–582 (LFVALLVGAVLLVGALTYVPA).

Belongs to the KdpA family. As to quaternary structure, the system is composed of three essential subunits: KdpA, KdpB and KdpC.

Its subcellular location is the cell inner membrane. Its function is as follows. Part of the high-affinity ATP-driven potassium transport (or Kdp) system, which catalyzes the hydrolysis of ATP coupled with the electrogenic transport of potassium into the cytoplasm. This subunit binds the periplasmic potassium ions and delivers the ions to the membrane domain of KdpB through an intramembrane tunnel. This is Potassium-transporting ATPase potassium-binding subunit from Bordetella parapertussis (strain 12822 / ATCC BAA-587 / NCTC 13253).